The chain runs to 107 residues: UPF0122 protein BLi01817/BL02321 (107 aa).

Belongs to the UPF0122 family.

Functionally, might take part in the signal recognition particle (SRP) pathway. This is inferred from the conservation of its genetic proximity to ftsY/ffh. May be a regulatory protein. This chain is UPF0122 protein BLi01817/BL02321, found in Bacillus licheniformis (strain ATCC 14580 / DSM 13 / JCM 2505 / CCUG 7422 / NBRC 12200 / NCIMB 9375 / NCTC 10341 / NRRL NRS-1264 / Gibson 46).